The chain runs to 173 residues: Crossover junction endodeoxyribonuclease RuvC (173 aa).

Active-site residues include Asp8, Glu67, and Asp139. Mg(2+)-binding residues include Asp8, Glu67, and Asp139.

Belongs to the RuvC family. Homodimer which binds Holliday junction (HJ) DNA. The HJ becomes 2-fold symmetrical on binding to RuvC with unstacked arms; it has a different conformation from HJ DNA in complex with RuvA. In the full resolvosome a probable DNA-RuvA(4)-RuvB(12)-RuvC(2) complex forms which resolves the HJ. Mg(2+) serves as cofactor.

The protein resides in the cytoplasm. It catalyses the reaction Endonucleolytic cleavage at a junction such as a reciprocal single-stranded crossover between two homologous DNA duplexes (Holliday junction).. Functionally, the RuvA-RuvB-RuvC complex processes Holliday junction (HJ) DNA during genetic recombination and DNA repair. Endonuclease that resolves HJ intermediates. Cleaves cruciform DNA by making single-stranded nicks across the HJ at symmetrical positions within the homologous arms, yielding a 5'-phosphate and a 3'-hydroxyl group; requires a central core of homology in the junction. The consensus cleavage sequence is 5'-(A/T)TT(C/G)-3'. Cleavage occurs on the 3'-side of the TT dinucleotide at the point of strand exchange. HJ branch migration catalyzed by RuvA-RuvB allows RuvC to scan DNA until it finds its consensus sequence, where it cleaves and resolves the cruciform DNA. This Yersinia enterocolitica serotype O:8 / biotype 1B (strain NCTC 13174 / 8081) protein is Crossover junction endodeoxyribonuclease RuvC.